A 441-amino-acid chain; its full sequence is Arginine biosynthesis bifunctional protein ArgJ, mitochondrial (441 aa).

Residues Thr-177, Lys-204, Thr-215, Glu-301, Asn-436, and Ser-441 each coordinate substrate. Thr-215 (nucleophile) is an active-site residue.

It belongs to the ArgJ family. As to quaternary structure, heterodimer of an alpha and a beta chain. In terms of processing, the alpha and beta chains are autoproteolytically processed from a single precursor protein within the mitochondrion.

It localises to the mitochondrion matrix. The enzyme catalyses N(2)-acetyl-L-ornithine + L-glutamate = N-acetyl-L-glutamate + L-ornithine. It carries out the reaction L-glutamate + acetyl-CoA = N-acetyl-L-glutamate + CoA + H(+). Its pathway is amino-acid biosynthesis; L-arginine biosynthesis; L-ornithine and N-acetyl-L-glutamate from L-glutamate and N(2)-acetyl-L-ornithine (cyclic): step 1/1. It participates in amino-acid biosynthesis; L-arginine biosynthesis; N(2)-acetyl-L-ornithine from L-glutamate: step 1/4. Its function is as follows. Catalyzes two activities which are involved in the cyclic version of arginine biosynthesis: the synthesis of acetylglutamate from glutamate and acetyl-CoA, and of ornithine by transacetylation between acetylornithine and glutamate. This chain is Arginine biosynthesis bifunctional protein ArgJ, mitochondrial, found in Lachancea thermotolerans (strain ATCC 56472 / CBS 6340 / NRRL Y-8284) (Yeast).